A 164-amino-acid chain; its full sequence is uncharacterized protein (164 aa).

This is an uncharacterized protein from Mycobacterium tuberculosis (strain CDC 1551 / Oshkosh).